The chain runs to 687 residues: MIDQYKHQQLRIGLVSPKQISAWATKILPNREIVGEVTKPYTFHYKTNKPEKDGLFCERIFGPIKSGICACGNYRVIRNEKEDPKFCEQCGVEFVDSRIRRYQMGYIKLACPVTHVWYLKRLPSYIANFLDKPLKELEGLVYCDYPNFSFARPIAKKPTFLRLRGLFEYEIQSWKYSIPLFFTTQGFDAFRNREISTGAGAIREQLADLDLRTIIDYSFAEWKELGEEDPTGNEWEDRKVGRRKDFLVRRMELAKHFIRTNIEPEWMVLCLLPVLPPELRPIIQIDGGKLMSSDINELYRRVIYRNNTLTDLLTTSRSTPGELVMCQEKLVQEAVDTLLDNGIRGQPMRDGHNKVYKSFSDVIEGKEGRFRETLLGKRVDYSGRSVIVVGPSLSLHRCGLPREIAIELFQTFIIRGLIRQHLASNIGVAKSKIREKEPIIWKILQEVMQGHPILLNRAPTLHRLGIQAFQPILVEGRAICLHPLVCKGFNADFDGDQMAVHVPLSLEAQTEARLLMFSHMNLLSPAIGDPISVPTQDMLIGLYILTSGTRRGICANRYNPWNRKNDQNERIDDKNYKYMEEPFFCNSYDAIGAYCQKRINLDSPLWLRWRLDQRIIASREAPVEVHYESLGTYHEIYAHYLIIRNIKKEIIFVYIRTTVGHIYLYREIEEAIQGFSRACSYGKTVLK.

Residues cysteine 69, cysteine 71, cysteine 87, and cysteine 90 each contribute to the Zn(2+) site. The Mg(2+) site is built by aspartate 492, aspartate 494, and aspartate 496.

The protein belongs to the RNA polymerase beta' chain family. RpoC1 subfamily. As to quaternary structure, in plastids the minimal PEP RNA polymerase catalytic core is composed of four subunits: alpha, beta, beta', and beta''. When a (nuclear-encoded) sigma factor is associated with the core the holoenzyme is formed, which can initiate transcription. The cofactor is Mg(2+). Requires Zn(2+) as cofactor.

It localises to the plastid. The protein resides in the chloroplast. The catalysed reaction is RNA(n) + a ribonucleoside 5'-triphosphate = RNA(n+1) + diphosphate. Its function is as follows. DNA-dependent RNA polymerase catalyzes the transcription of DNA into RNA using the four ribonucleoside triphosphates as substrates. The polypeptide is DNA-directed RNA polymerase subunit beta' (Silene latifolia (White campion)).